The sequence spans 989 residues: Envelope glycoprotein gp130 (989 aa).

Residues 1–15 (MAPPMTLQQWIIWKK) form an involved in virion budding region. Over 1–65 (MAPPMTLQQW…YLLYTCCATS (65 aa)) the chain is Cytoplasmic. Glycyl lysine isopeptide (Lys-Gly) (interchain with G-Cter in ubiquitin) cross-links involve residues Lys14, Lys15, Lys18, Lys34, and Lys53. Residues 66–88 (SRVLAWMFLVCILLIIVLVSCFV) traverse the membrane as a helical; Signal-anchor for type III membrane protein segment. The Lumenal portion of the chain corresponds to 89–961 (TISRIQWNKD…AFSLLGYLKP (873 aa)). N-linked (GlcNAc...) asparagine; by host glycosylation is found at Asn109, Asn141, Asn183, Asn286, Asn311, Asn346, Asn391, Asn405, Asn423, Asn528, and Asn557. A fusion peptide region spans residues 577–599 (NYAKLRSMGYALTGAVQTLSQIS). N-linked (GlcNAc...) asparagine; by host glycosylation is found at Asn783, Asn809, and Asn834. Residues 962-982 (ILIGVGVILLVILIFKIVSWI) traverse the membrane as a helical segment. At 983–989 (PTKKKNQ) the chain is on the cytoplasmic side. The Endoplasmic reticulum retention signal motif lies at 985–987 (KKK).

In terms of assembly, the mature envelope protein consists of a trimer of SU-TM heterodimers. The N-terminus of leader peptide specifically interacts with Gag protein. This specific interaction between Gag protein and Env glycoprotein may allow particle egress. In terms of processing, envelope glycoproteins are synthesized as an inactive precursor that is processed by host furin or a furin-like protease to yield a functional hetero-oligomeric complex. Post-translationally, the transmembrane protein and the surface protein are N-glycosylated. Mono- and polyubiquitinated leader peptide are found in viral particles. Ubiquitination may be involved in regulating the balance between viral and subviral particles release.

It localises to the host endoplasmic reticulum membrane. Its subcellular location is the virion membrane. Its function is as follows. The surface protein (SU) attaches the virus to the host cell by binding to the cell receptor. This interaction triggers the refolding of transmembrane protein (TM) and is thought to activate its fusogenic potential by unmasking its fusion peptide. In terms of biological role, the transmembrane protein (TM) acts as a class I viral fusion protein. Under the current model, the protein has at least 3 conformational states: pre-fusion native state, pre-hairpin intermediate state, and post-fusion hairpin state. During viral and target cell membrane fusion, the coiled coil regions (heptad repeats) assume a trimer-of-hairpins structure, positioning the fusion peptide in close proximity to the C-terminal region of the ectodomain. The formation of this structure appears to drive apposition and subsequent fusion of viral and target cell membranes. Membranes fusion leads to delivery of the nucleocapsid into the cytoplasm. Functionally, the leader peptide is a component of released, infectious virions and is required for particle budding. The sequence is that of Envelope glycoprotein gp130 (env) from Homo sapiens (Human).